Reading from the N-terminus, the 292-residue chain is 1,4-dihydroxy-2-naphthoate octaprenyltransferase (292 aa).

Helical transmembrane passes span 35 to 55 (AAVWWKALLALAVAVALVIGV), 101 to 121 (ALAGLVLALLSAPWLIAVGAI), 137 to 157 (GYAGFGELAVFVFFGPVAVLG), 166 to 186 (VDWVGLAQAVATGALSCSVLV), 220 to 240 (LLAVAGVLTFVLMLATPWCVV), and 271 to 291 (TGLAMLVWALAVAGALAFGQL).

The protein belongs to the MenA family. Type 1 subfamily. Mg(2+) is required as a cofactor.

It localises to the cell membrane. The catalysed reaction is an all-trans-polyprenyl diphosphate + 1,4-dihydroxy-2-naphthoate + H(+) = a 2-demethylmenaquinol + CO2 + diphosphate. Its pathway is quinol/quinone metabolism; menaquinone biosynthesis; menaquinol from 1,4-dihydroxy-2-naphthoate: step 1/2. Its activity is regulated as follows. Activity is abolished by EDTA. Inhibited by Ro 48-8071, which is non-competitive with regard to DHNA and competitive with regard to the isoprenyldiphosphate substrate. Functionally, conversion of 1,4-dihydroxy-2-naphthoate (DHNA) to demethylmenaquinone (DMK). Can use a variety of allylic isoprenyl diphosphates as substrates but has a requirement for at least three isoprene units. In Mycobacterium tuberculosis (strain ATCC 25618 / H37Rv), this protein is 1,4-dihydroxy-2-naphthoate octaprenyltransferase.